The sequence spans 63 residues: Large ribosomal subunit protein uL29 (63 aa).

It belongs to the universal ribosomal protein uL29 family.

The protein is Large ribosomal subunit protein uL29 of Bacillus cereus (strain ATCC 14579 / DSM 31 / CCUG 7414 / JCM 2152 / NBRC 15305 / NCIMB 9373 / NCTC 2599 / NRRL B-3711).